The following is a 116-amino-acid chain: Putative superoxide reductase (116 aa).

Positions 20, 46, 52, 101, and 104 each coordinate Fe cation.

The protein belongs to the desulfoferrodoxin family. Fe cation is required as a cofactor.

The enzyme catalyses reduced [rubredoxin] + superoxide + 2 H(+) = oxidized [rubredoxin] + H2O2. Functionally, uses electrons from reduced NADP, by way of rubredoxin and an oxidoreductase, to catalyze the reduction of superoxide to hydrogen peroxide. This chain is Putative superoxide reductase, found in Methanocaldococcus jannaschii (strain ATCC 43067 / DSM 2661 / JAL-1 / JCM 10045 / NBRC 100440) (Methanococcus jannaschii).